The chain runs to 376 residues: Protein-glutamate methylesterase/protein-glutamine glutaminase (376 aa).

The Response regulatory domain maps to 4 to 121; that stretch reads KVLVVDDSSF…ARNRDEAVSL (118 aa). Aspartate 55 is subject to 4-aspartylphosphate. Residues 142–161 are disordered; it reads SSQSTSTVESRTATTRTATS. Residues 145 to 161 show a composition bias toward low complexity; that stretch reads STSTVESRTATTRTATS. Positions 183 to 376 constitute a CheB-type methylesterase domain; it reads TGKKYQLTAI…ERMLVEVGLK (194 aa). Active-site residues include serine 195, histidine 222, and aspartate 318.

It belongs to the CheB family. Phosphorylated by CheA. Phosphorylation of the N-terminal regulatory domain activates the methylesterase activity.

The protein localises to the cytoplasm. The enzyme catalyses [protein]-L-glutamate 5-O-methyl ester + H2O = L-glutamyl-[protein] + methanol + H(+). It catalyses the reaction L-glutaminyl-[protein] + H2O = L-glutamyl-[protein] + NH4(+). Involved in chemotaxis. Part of a chemotaxis signal transduction system that modulates chemotaxis in response to various stimuli. Catalyzes the demethylation of specific methylglutamate residues introduced into the chemoreceptors (methyl-accepting chemotaxis proteins or MCP) by CheR. Also mediates the irreversible deamidation of specific glutamine residues to glutamic acid. The sequence is that of Protein-glutamate methylesterase/protein-glutamine glutaminase from Aliivibrio fischeri (strain ATCC 700601 / ES114) (Vibrio fischeri).